A 240-amino-acid polypeptide reads, in one-letter code: uncharacterized protein (240 aa).

The N-terminal stretch at 1–18 (MTRYTYLFILQIISCSFA) is a signal peptide. Asparagine 127 carries N-linked (GlcNAc...) asparagine glycosylation. A helical membrane pass occupies residues 215–235 (GFISSSQLPQFVYLIVFTIIG).

The protein resides in the membrane. This is an uncharacterized protein from Caenorhabditis elegans.